The following is a 236-amino-acid chain: Small ribosomal subunit protein uS2c (236 aa).

This sequence belongs to the universal ribosomal protein uS2 family.

Its subcellular location is the plastid. The protein resides in the chloroplast. The protein is Small ribosomal subunit protein uS2c (rps2) of Gossypium barbadense (Sea Island cotton).